The following is a 433-amino-acid chain: 3-phosphoshikimate 1-carboxyvinyltransferase (433 aa).

Residues K22, S23, and R27 each contribute to the 3-phosphoshikimate site. Position 22 (K22) interacts with phosphoenolpyruvate. The phosphoenolpyruvate site is built by G96 and R130. The 3-phosphoshikimate site is built by S176, S177, Q178, S204, D319, N342, and K346. Q178 contributes to the phosphoenolpyruvate binding site. Catalysis depends on D319, which acts as the Proton acceptor. Residues R350, R394, and K419 each contribute to the phosphoenolpyruvate site.

The protein belongs to the EPSP synthase family. As to quaternary structure, monomer.

It localises to the cytoplasm. It carries out the reaction 3-phosphoshikimate + phosphoenolpyruvate = 5-O-(1-carboxyvinyl)-3-phosphoshikimate + phosphate. The protein operates within metabolic intermediate biosynthesis; chorismate biosynthesis; chorismate from D-erythrose 4-phosphate and phosphoenolpyruvate: step 6/7. In terms of biological role, catalyzes the transfer of the enolpyruvyl moiety of phosphoenolpyruvate (PEP) to the 5-hydroxyl of shikimate-3-phosphate (S3P) to produce enolpyruvyl shikimate-3-phosphate and inorganic phosphate. The sequence is that of 3-phosphoshikimate 1-carboxyvinyltransferase from Actinobacillus succinogenes (strain ATCC 55618 / DSM 22257 / CCUG 43843 / 130Z).